The sequence spans 667 residues: DNA ligase (667 aa).

NAD(+)-binding positions include 32–36 (DSEYD), 81–82 (SL), and E110. K112 functions as the N6-AMP-lysine intermediate in the catalytic mechanism. The NAD(+) site is built by R133, E167, K283, and K307. Residues C401, C404, C419, and C424 each contribute to the Zn(2+) site. Positions 586–667 (EGHPDFKDKT…FVQKQNEIEG (82 aa)) constitute a BRCT domain.

It belongs to the NAD-dependent DNA ligase family. LigA subfamily. The cofactor is Mg(2+). It depends on Mn(2+) as a cofactor.

It catalyses the reaction NAD(+) + (deoxyribonucleotide)n-3'-hydroxyl + 5'-phospho-(deoxyribonucleotide)m = (deoxyribonucleotide)n+m + AMP + beta-nicotinamide D-nucleotide.. In terms of biological role, DNA ligase that catalyzes the formation of phosphodiester linkages between 5'-phosphoryl and 3'-hydroxyl groups in double-stranded DNA using NAD as a coenzyme and as the energy source for the reaction. It is essential for DNA replication and repair of damaged DNA. The polypeptide is DNA ligase (Staphylococcus saprophyticus subsp. saprophyticus (strain ATCC 15305 / DSM 20229 / NCIMB 8711 / NCTC 7292 / S-41)).